Reading from the N-terminus, the 398-residue chain is Metal tolerance protein 1 (398 aa).

Over 1 to 56 the chain is Cytoplasmic; the sequence is MESSSPHHSHIVEVNVGKSDEERIIVASKVCGEAPCGFSDSKNASGDAHERSASMR. A helical transmembrane segment spans residues 57–77; it reads KLCIAVVLCLVFMSVEVVGGI. Topologically, residues 78–89 are vacuolar; the sequence is KANSLAILTDAA. A helical membrane pass occupies residues 90–110; sequence HLLSDVAAFAISLFSLWAAGW. The Cytoplasmic portion of the chain corresponds to 111–122; the sequence is EATPRQTYGFFR. A helical transmembrane segment spans residues 123-143; that stretch reads IEILGALVSIQLIWLLTGILV. The Vacuolar portion of the chain corresponds to 144-159; it reads YEAIIRIVTETSEVNG. Residues 160–180 traverse the membrane as a helical segment; sequence FLMFLVAAFGLVVNIIMAVLL. The Cytoplasmic segment spans residues 181 to 263; sequence GHDHGHSHGH…KRNINLQGAY (83 aa). The interval 182–232 is required for zinc-binding; the sequence is HDHGHSHGHGHGHGHDHHNHSHGVTVTTHHHHHDHEHGHSHGHGEDKHHAH. Residues 186 to 232 form a disordered region; sequence HSHGHGHGHGHDHHNHSHGVTVTTHHHHHDHEHGHSHGHGEDKHHAH. Residues 187 to 202 are compositionally biased toward basic residues; that stretch reads SHGHGHGHGHDHHNHS. The segment covering 216–232 has biased composition (basic and acidic residues); that stretch reads HEHGHSHGHGEDKHHAH. The helical transmembrane segment at 264 to 284 threads the bilayer; that stretch reads LHVLGDSIQSVGVMIGGAIIW. Topologically, residues 285–290 are vacuolar; sequence YNPEWK. The chain crosses the membrane as a helical span at residues 291-311; the sequence is IVDLICTLAFSVIVLGTTINM. The Cytoplasmic segment spans residues 312–398; that stretch reads IRNILEVLME…ISHVTIQIER (87 aa).

The protein belongs to the cation diffusion facilitator (CDF) transporter (TC 2.A.4) family. SLC30A subfamily. In terms of tissue distribution, ubiquitously expressed at low levels.

Its subcellular location is the vacuole membrane. In terms of biological role, mediates zinc accumulation in roots and confers resistance to zinc. Involved in sequestration of excess zinc in the cytoplasm into vacuoles to maintain zinc homeostasis. Can also transport cadmium with a low efficiency. In Arabidopsis thaliana (Mouse-ear cress), this protein is Metal tolerance protein 1.